The primary structure comprises 95 residues: Co-chaperonin GroES (95 aa).

This sequence belongs to the GroES chaperonin family. Heptamer of 7 subunits arranged in a ring. Interacts with the chaperonin GroEL.

It is found in the cytoplasm. Its function is as follows. Together with the chaperonin GroEL, plays an essential role in assisting protein folding. The GroEL-GroES system forms a nano-cage that allows encapsulation of the non-native substrate proteins and provides a physical environment optimized to promote and accelerate protein folding. GroES binds to the apical surface of the GroEL ring, thereby capping the opening of the GroEL channel. In Nitratidesulfovibrio vulgaris (strain DSM 19637 / Miyazaki F) (Desulfovibrio vulgaris), this protein is Co-chaperonin GroES.